The chain runs to 403 residues: Tyrosine--tRNA ligase (403 aa).

Residues 42 to 51 carry the 'HIGH' region motif; sequence PTAPDLHLGH. Residues 226 to 230 carry the 'KMSKS' region motif; sequence KMSKS. An ATP-binding site is contributed by Lys229. One can recognise an S4 RNA-binding domain in the interval 339-400; it reads LRIASLLTAA…GKRNFARVAL (62 aa).

The protein belongs to the class-I aminoacyl-tRNA synthetase family. TyrS type 2 subfamily. As to quaternary structure, homodimer.

It is found in the cytoplasm. It carries out the reaction tRNA(Tyr) + L-tyrosine + ATP = L-tyrosyl-tRNA(Tyr) + AMP + diphosphate + H(+). In terms of biological role, catalyzes the attachment of tyrosine to tRNA(Tyr) in a two-step reaction: tyrosine is first activated by ATP to form Tyr-AMP and then transferred to the acceptor end of tRNA(Tyr). The sequence is that of Tyrosine--tRNA ligase from Xanthomonas campestris pv. campestris (strain ATCC 33913 / DSM 3586 / NCPPB 528 / LMG 568 / P 25).